The sequence spans 278 residues: Indole-3-glycerol phosphate synthase (278 aa).

It belongs to the TrpC family.

It carries out the reaction 1-(2-carboxyphenylamino)-1-deoxy-D-ribulose 5-phosphate + H(+) = (1S,2R)-1-C-(indol-3-yl)glycerol 3-phosphate + CO2 + H2O. It functions in the pathway amino-acid biosynthesis; L-tryptophan biosynthesis; L-tryptophan from chorismate: step 4/5. This is Indole-3-glycerol phosphate synthase from Pseudomonas fluorescens (strain Pf0-1).